The sequence spans 747 residues: MDGGGSSSWTHVSKNLIERRAVKGCLLPTPSDVMDAAVMALKDVTENIVGQQLFSVDRTNALSVIHTNEVPESIIATAIARDTSRDYLREYEGAAKCNLAATDLSHDEMWEVVIKRYWRYLRESSGAEVVDRGAVGQATQSVLSVLLLQSTFGKKRLSKNPFKHKGPNVGYKSNLEDLRSAFTKIEKYMYYMRPNDPMTKSEDTELRLHELLAYVTTCYRWLLWFMDLTDAKVLRNIDKGPVITHGPRESRPPDELVRRHLKSGPAISAGTGVALTLSTATADALIVLLRMSVSWTSHSWKSNTHGVTGAIVAAVELVTLIHHHLQYIINTVFAGYVCWLDGGVENSYLNSALRSQGRFDHFVGKLVPIMATLSWANMEKGTVMWFKYALAKSIVCHGSPTQHYLTVLESIASKRTGACPPQGSTFGRNPSGFPGQFCCPPQGPLPAPPNSKTRGTFRRCRPGSLRSSRQLPTSPPSNIVSPRTNPAIEGSTAAKNVQGAETIQVRSSGEFNDCIWYINGAYPHQRSDSSSSDNSTCSSTETQYITLPSTPSPTGDVVYTNPLLGPDEEVDASPQPVDPMSDYSAPKNPDYMRPRSTLVEEVWQLRDSDYTPYMRPSRAGRSRVRVEDQTLEPSSPAGCNPPANSPENDSDDAAVDSPPISPEVVYGTFRPRAKCVYDQYGLTALAALSASRAKARRTRPGPTQPDVCRERDEESAEPRHDGFIRRTMSTTGPPRKHPDQTERVSSL.

Disordered regions lie at residues 437 to 484 (FCCP…SPRT), 525 to 593 (QRSD…DYMR), 611 to 665 (TPYM…PEVV), and 689 to 747 (SASR…VSSL). The span at 465–484 (LRSSRQLPTSPPSNIVSPRT) shows a compositional bias: polar residues. The span at 528 to 540 (DSSSSDNSTCSST) shows a compositional bias: low complexity. Residues 541–553 (ETQYITLPSTPSP) are compositionally biased toward polar residues. Basic and acidic residues-rich tracts occupy residues 707-724 (VCRE…DGFI) and 736-747 (KHPDQTERVSSL).

The protein belongs to the herpesviridae HHV-1 VP11/12 protein family.

The protein localises to the virion tegument. The protein resides in the host cell membrane. Modulates alpha trans-inducing factor-dependent activation of alpha genes. In Equine herpesvirus 1 (strain Ab4p) (EHV-1), this protein is Tegument protein UL46 homolog.